A 289-amino-acid chain; its full sequence is Formamidopyrimidine-DNA glycosylase 1 (289 aa).

Pro2 serves as the catalytic Schiff-base intermediate with DNA. Glu3 functions as the Proton donor in the catalytic mechanism. Lys61 (proton donor; for beta-elimination activity) is an active-site residue. DNA contacts are provided by His100, Arg119, and Lys165. The segment at 251–285 (DAYGREGENCRRCGAVIRRERFMNRSSFYCPRCQP) adopts an FPG-type zinc-finger fold. Arg275 acts as the Proton donor; for delta-elimination activity in catalysis.

It belongs to the FPG family. As to quaternary structure, monomer. The cofactor is Zn(2+).

The catalysed reaction is Hydrolysis of DNA containing ring-opened 7-methylguanine residues, releasing 2,6-diamino-4-hydroxy-5-(N-methyl)formamidopyrimidine.. It carries out the reaction 2'-deoxyribonucleotide-(2'-deoxyribose 5'-phosphate)-2'-deoxyribonucleotide-DNA = a 3'-end 2'-deoxyribonucleotide-(2,3-dehydro-2,3-deoxyribose 5'-phosphate)-DNA + a 5'-end 5'-phospho-2'-deoxyribonucleoside-DNA + H(+). Functionally, involved in base excision repair of DNA damaged by oxidation or by mutagenic agents. Acts as a DNA glycosylase that recognizes and removes damaged bases. Has a preference for oxidized purines, such as 7,8-dihydro-8-oxoguanine (8-oxoG) when paired with C, G or T, as well as methyl-faPy (formanidopyrimidine residues) in poly(dG-dC) and spiroiminodihydantoin:C base pairs. Unlike its E.coli ortholog has no activity on 8-oxoG:A. Has AP (apurinic/apyrimidinic) lyase activity and introduces nicks in the DNA strand. Cleaves the DNA backbone by beta-delta elimination to generate a single-strand break at the site of the removed base with both 3'- and 5'-phosphates. Cleaves ssDNA containing an AP site. Complements the H(2)O(2) sensitivity of an M.smegmatis fpg disruption mutant; upon expression in M.smegmatis excises 8-oxoG from dsDNA. The polypeptide is Formamidopyrimidine-DNA glycosylase 1 (fpg1) (Mycobacterium tuberculosis (strain ATCC 25618 / H37Rv)).